The chain runs to 64 residues: Sperm protamine P1 (64 aa).

A disordered region spans residues Met-1–Tyr-64.

This sequence belongs to the protamine P1 family. As to expression, testis.

Its subcellular location is the nucleus. The protein resides in the chromosome. In terms of biological role, protamines substitute for histones in the chromatin of sperm during the haploid phase of spermatogenesis. They compact sperm DNA into a highly condensed, stable and inactive complex. The sequence is that of Sperm protamine P1 (PRM1) from Dromiciops gliroides (Monito del Monte).